A 345-amino-acid polypeptide reads, in one-letter code: Phosphoribosylformylglycinamidine cyclo-ligase (345 aa).

This sequence belongs to the AIR synthase family.

The protein localises to the cytoplasm. It carries out the reaction 2-formamido-N(1)-(5-O-phospho-beta-D-ribosyl)acetamidine + ATP = 5-amino-1-(5-phospho-beta-D-ribosyl)imidazole + ADP + phosphate + H(+). The protein operates within purine metabolism; IMP biosynthesis via de novo pathway; 5-amino-1-(5-phospho-D-ribosyl)imidazole from N(2)-formyl-N(1)-(5-phospho-D-ribosyl)glycinamide: step 2/2. In Escherichia coli O7:K1 (strain IAI39 / ExPEC), this protein is Phosphoribosylformylglycinamidine cyclo-ligase.